The chain runs to 311 residues: Dihydroorotate dehydrogenase B (NAD(+)), catalytic subunit (311 aa).

Residues Ser24 and 48-49 each bind FMN; that span reads KA. Residues Lys48 and 72–76 each bind substrate; that span reads NAIGL. Positions 104 and 132 each coordinate FMN. Asn132 contacts substrate. Catalysis depends on Cys135, which acts as the Nucleophile. FMN is bound by residues Lys170 and Ile196. 197–198 contributes to the substrate binding site; the sequence is NT. FMN is bound by residues Gly222, 248 to 249, and 270 to 271; these read GG and GT.

The protein belongs to the dihydroorotate dehydrogenase family. Type 1 subfamily. In terms of assembly, heterotetramer of 2 PyrK and 2 PyrD type B subunits. It depends on FMN as a cofactor.

It is found in the cytoplasm. The catalysed reaction is (S)-dihydroorotate + NAD(+) = orotate + NADH + H(+). The protein operates within pyrimidine metabolism; UMP biosynthesis via de novo pathway; orotate from (S)-dihydroorotate (NAD(+) route): step 1/1. Its function is as follows. Catalyzes the conversion of dihydroorotate to orotate with NAD(+) as electron acceptor. Cannot use fumarate as an electron acceptor. The chain is Dihydroorotate dehydrogenase B (NAD(+)), catalytic subunit (pyrDB) from Lactococcus lactis subsp. cremoris (strain MG1363).